We begin with the raw amino-acid sequence, 156 residues long: Glutaredoxin-2, mitochondrial (156 aa).

A mitochondrion-targeting transit peptide spans 1–19 (MSWRRAASVGRRLVASGRI). One can recognise a Glutaredoxin domain in the interval 50-150 (VNQIQETISN…PLVHQCYLKK (101 aa)). Residue Cys-61 participates in [2Fe-2S] cluster binding. Lys-67 provides a ligand contact to glutathione. Cys-70 is subject to S-glutathionyl cysteine; alternate. Cysteines 70 and 73 form a disulfide. Glutathione contacts are provided by Gln-102 and Val-114. Cys-146 provides a ligand contact to [2Fe-2S] cluster.

Belongs to the glutaredoxin family. In terms of assembly, monomer; active form. Homodimer; inactive form. The homodimer is probably linked by 1 2Fe-2S cluster. In terms of tissue distribution, widely expressed. Highly expressed in testis, and at much lower level in kidney and brain.

Its subcellular location is the mitochondrion. The protein resides in the nucleus. With respect to regulation, the 2Fe-2S present in the homodimer leads to inactivation of the enzyme. The 2Fe-2S may serve as a redox sensor: the presence of one-electron oxidants or reductants leading to the loss of the 2Fe-2S cluster, subsequent monomerization and activation of the enzyme. Glutathione-dependent oxidoreductase that facilitates the maintenance of mitochondrial redox homeostasis upon induction of apoptosis by oxidative stress. Involved in response to hydrogen peroxide and regulation of apoptosis caused by oxidative stress. Acts as a very efficient catalyst of monothiol reactions because of its high affinity for protein glutathione-mixed disulfides. Can receive electrons not only from glutathione (GSH), but also from thioredoxin reductase supporting both monothiol and dithiol reactions. Efficiently catalyzes both glutathionylation and deglutathionylation of mitochondrial complex I, which in turn regulates the superoxide production by the complex. Overexpression decreases the susceptibility to apoptosis and prevents loss of cardiolipin and cytochrome c release. This is Glutaredoxin-2, mitochondrial (Glrx2) from Mus musculus (Mouse).